The following is a 234-amino-acid chain: Peptidase E (234 aa).

Active-site charge relay system residues include S123, D138, and H160.

This sequence belongs to the peptidase S51 family.

It is found in the cytoplasm. The enzyme catalyses Dipeptidase E catalyzes the hydrolysis of dipeptides Asp-|-Xaa. It does not act on peptides with N-terminal Glu, Asn or Gln, nor does it cleave isoaspartyl peptides.. Functionally, hydrolyzes dipeptides containing N-terminal aspartate residues. May play a role in allowing the cell to use peptide aspartate to spare carbon otherwise required for the synthesis of the aspartate family of amino acids. The protein is Peptidase E of Pasteurella multocida (strain Pm70).